Consider the following 531-residue polypeptide: Probable peptide ABC transporter periplasmic-binding protein y4tO (531 aa).

A signal peptide (tat-type signal) is located at residues Met-1–Ala-32.

Belongs to the bacterial solute-binding protein 5 family. Predicted to be exported by the Tat system. The position of the signal peptide cleavage has not been experimentally proven.

It is found in the periplasm. Its function is as follows. Probably part of the binding-protein-dependent transport system y4tOPQRS for a peptide. This Sinorhizobium fredii (strain NBRC 101917 / NGR234) protein is Probable peptide ABC transporter periplasmic-binding protein y4tO.